The primary structure comprises 165 residues: Crossover junction endodeoxyribonuclease RuvC (165 aa).

Residues Asp6, Glu67, and Asp142 contribute to the active site. Positions 6, 67, and 142 each coordinate Mg(2+).

The protein belongs to the RuvC family. As to quaternary structure, homodimer which binds Holliday junction (HJ) DNA. The HJ becomes 2-fold symmetrical on binding to RuvC with unstacked arms; it has a different conformation from HJ DNA in complex with RuvA. In the full resolvosome a probable DNA-RuvA(4)-RuvB(12)-RuvC(2) complex forms which resolves the HJ. Mg(2+) serves as cofactor.

The protein resides in the cytoplasm. The catalysed reaction is Endonucleolytic cleavage at a junction such as a reciprocal single-stranded crossover between two homologous DNA duplexes (Holliday junction).. The RuvA-RuvB-RuvC complex processes Holliday junction (HJ) DNA during genetic recombination and DNA repair. Endonuclease that resolves HJ intermediates. Cleaves cruciform DNA by making single-stranded nicks across the HJ at symmetrical positions within the homologous arms, yielding a 5'-phosphate and a 3'-hydroxyl group; requires a central core of homology in the junction. The consensus cleavage sequence is 5'-(A/T)TT(C/G)-3'. Cleavage occurs on the 3'-side of the TT dinucleotide at the point of strand exchange. HJ branch migration catalyzed by RuvA-RuvB allows RuvC to scan DNA until it finds its consensus sequence, where it cleaves and resolves the cruciform DNA. In Chlamydia abortus (strain DSM 27085 / S26/3) (Chlamydophila abortus), this protein is Crossover junction endodeoxyribonuclease RuvC.